Reading from the N-terminus, the 156-residue chain is Arginine repressor (156 aa).

Belongs to the ArgR family.

It localises to the cytoplasm. Its pathway is amino-acid biosynthesis; L-arginine biosynthesis [regulation]. Regulates arginine biosynthesis genes. In Aliivibrio fischeri (strain ATCC 700601 / ES114) (Vibrio fischeri), this protein is Arginine repressor.